The sequence spans 433 residues: Vesicle-associated protein (433 aa).

2 tandem repeats follow at residues 112–122 and 219–229. Positions 112–350 are 3 X 11 AA repeats of G-G-G-I-G-G-G-L-G-G-G; it reads GGGIGGGLGG…GGIGGGLGGG (239 aa). Positions 266 to 274 match the Nuclear localization signal motif; that stretch reads VDGKKKGKG. The stretch at 340-350 is repeat 3; sequence GGGIGGGLGGG. Disordered stretches follow at residues 366 to 389 and 411 to 433; these read RVGG…DGDG and HGKG…NVSG. The span at 423–433 shows a compositional bias: basic and acidic residues; it reads DIERPDLNVSG.

As to expression, egg cortex.

It is found in the microsome membrane. Its subcellular location is the nucleus. It localises to the endoplasmic reticulum membrane. Functionally, may function as a multidomain RNA-binding protein. May play a role in nuclear RNA processing and in early development. The sequence is that of Vesicle-associated protein (VAP-1) from Strongylocentrotus purpuratus (Purple sea urchin).